Here is a 1888-residue protein sequence, read N- to C-terminus: E3 ubiquitin-protein ligase UBR3 (1888 aa).

A disordered region spans residues 1–24; the sequence is MAAAAAAAVGGQQPSQPELPAPGL. Residues 118 to 189 form a UBR-type zinc finger; the sequence is ALCGLVWTAN…ESGFCKRHQI (72 aa). Positions 339–362 are disordered; it reads GQVDSSDEDDQDGSQGLGKRKRVK. Phosphoserine occurs at positions 343 and 344. 2 consecutive transmembrane segments (helical) span residues 761-781 and 919-939; these read MLEGALTFLVILLSLRLHLGM and LLHCKTLHIVLFTLLYKILMD. Disordered stretches follow at residues 1008–1028 and 1164–1186; these read APEVKRDSPASTSSDNLGSLQ and VPPKKVTAAEKKTLDKEERRQKA. Polar residues predominate over residues 1016-1028; that stretch reads PASTSSDNLGSLQ. The stretch at 1168 to 1199 forms a coiled coil; the sequence is KVTAAEKKTLDKEERRQKARERQQKLLAEFAS. Over residues 1170 to 1186 the composition is skewed to basic and acidic residues; sequence TAAEKKTLDKEERRQKA. A Phosphoserine modification is found at Ser1199. The RING-type; degenerate zinc-finger motif lies at 1306–1364; it reads DSSCLLAVSIGWEGGVYVQTCGHTLHIDCHKSYMESLRNDQVLQGFSVDKGEFTCPLCR. Residues 1806-1826 form a helical membrane-spanning segment; it reads QNCGAGTGIFLLINASVIIII.

It belongs to the E3 ubiquitin-protein ligase UBR1-like family. In terms of assembly, interacts with UBE2A and UBE2B.

The protein localises to the membrane. The catalysed reaction is S-ubiquitinyl-[E2 ubiquitin-conjugating enzyme]-L-cysteine + [acceptor protein]-L-lysine = [E2 ubiquitin-conjugating enzyme]-L-cysteine + N(6)-ubiquitinyl-[acceptor protein]-L-lysine.. Its pathway is protein modification; protein ubiquitination. Its function is as follows. E3 ubiquitin-protein ligase which is a component of the N-end rule pathway. Does not bind to proteins bearing specific N-terminal residues that are destabilizing according to the N-end rule, leading to their ubiquitination and subsequent degradation. May play a role in Shh signaling by mediating the ubiquitination of Kif7. May be important for MYH9 function in certain tissues, possibly by regulating the ubiquitination of MYH9 and consequently affecting its interaction with MYO7A. The chain is E3 ubiquitin-protein ligase UBR3 (UBR3) from Homo sapiens (Human).